A 71-amino-acid polypeptide reads, in one-letter code: Palustrin-Ca (71 aa).

Positions 1-22 (MFTLKKSLLLLFFLGTISLSLC) are cleaved as a signal peptide. Positions 23-40 (EQERDADGDEGEVEEVKR) are excised as a propeptide. A disulfide bond links C63 and C69.

This sequence belongs to the frog skin active peptide (FSAP) family. Brevinin subfamily. Expressed by the skin glands.

Its subcellular location is the secreted. The protein resides in the target cell membrane. In terms of biological role, antibacterial peptide with amphipathic alpha-helical structure that exhibits potent broad-spectrum activity against Gram-positive and -negative bacteria. It is active against Listeria ATCC 54004 (MIC=30 ug/ml), S.aureus ATCC 25923 (MIC=7.8 ug/ml), S.suis 2 CVCC 606 (MIC=31.25 ug/ml), B.subtilis ADB403 (30 ug/ml), K.pneumoniae ATCC 700603 (MIC=60 ug/ml) and P.aeruginosa ATCC 227853 (MIC=30 ug/ml). Does not show activity against Salmonella ATCC 20020 and the fungus Candida albicans. Is also cytotoxic to HeLa cells at high concentrations. In addition, shows a strong antitumor activity but only a little hemolytic activity. Despite the presence of a Gly residue at position 10, this alpha-helical peptide remains relatively rigid, not exhibiting any significant flexibility during the molecular dynamics simulation. The peptide shows a preference for a position parallel to the target membrane that suggests it exerts its antimicrobial activity through a non-pore-forming mechanism of action, such as the carpet model or the interfacial activity model. This Aquarana catesbeiana (American bullfrog) protein is Palustrin-Ca.